A 127-amino-acid chain; its full sequence is Basic leucine zipper transcriptional factor ATF-like 3 (127 aa).

The disordered stretch occupies residues methionine 1–glutamine 72. A phosphoserine mark is found at serine 2 and serine 31. The bZIP domain maps to aspartate 35–histidine 98. Positions arginine 37 to lysine 62 are basic motif. Residues glutamine 58–tyrosine 67 show a composition bias toward basic and acidic residues. A leucine-zipper region spans residues leucine 63 to leucine 91.

This sequence belongs to the bZIP family. As to quaternary structure, heterodimer; heterodimerizes with JUN family proteins. Interacts with JUN.

Its subcellular location is the nucleus. Functionally, AP-1 family transcription factor that controls the differentiation of CD8(+) thymic conventional dendritic cells in the immune system. Required for development of CD8-alpha(+) classical dendritic cells (cDCs) and related CD103(+) dendritic cells that cross-present antigens to CD8 T-cells and produce interleukin-12 (IL12) in response to pathogens. Acts via the formation of a heterodimer with JUN family proteins that recognizes and binds DNA sequence 5'-TGA[CG]TCA-3' and regulates expression of target genes. The sequence is that of Basic leucine zipper transcriptional factor ATF-like 3 (BATF3) from Homo sapiens (Human).